Here is a 692-residue protein sequence, read N- to C-terminus: Putative ESX-1 scaffolding and assembly protein SaeA (692 aa).

The segment covering 1 to 21 (MGERGELVSDLHPSDDHDADP) has biased composition (basic and acidic residues). Disordered regions lie at residues 1–23 (MGER…DPRL) and 87–134 (PAAP…TTGF). Over residues 89-107 (APEPDPPPVPEPQPEPEPG) the composition is skewed to pro residues.

Its subcellular location is the cytoplasm. May be involved in assembly of the ESX-1 / type VII specialized secretion system (T7SS), which exports several proteins including EsxA and EsxB. Involved in DNA conjugation in recipient (MKD8) but not donor (mc(2)155) strain. The protein is Putative ESX-1 scaffolding and assembly protein SaeA of Mycolicibacterium smegmatis (strain ATCC 700084 / mc(2)155) (Mycobacterium smegmatis).